The sequence spans 312 residues: Acetaldehyde dehydrogenase (312 aa).

Position 12-15 (12-15 (SGNI)) interacts with NAD(+). C132 functions as the Acyl-thioester intermediate in the catalytic mechanism. NAD(+)-binding positions include 163 to 171 (SAGPGTRAN) and N290.

It belongs to the acetaldehyde dehydrogenase family. As to quaternary structure, heterotetramer composed of two DmpG (aldolase) and two DmpF (dehydrogenase) subunits, which allows a direct channeling of acetaldehyde between the two active sites.

It carries out the reaction acetaldehyde + NAD(+) + CoA = acetyl-CoA + NADH + H(+). The protein operates within aromatic compound metabolism; phenol degradation. Its activity is regulated as follows. Is not activated by Mn(2+), Mg(2+), Ca(2+), Zn(2+) or Co(2+). In terms of biological role, catalyzes the conversion of acetaldehyde to acetyl-CoA, using NAD(+) and coenzyme A. Can also act on propanal and butanal to form propanoyl-CoA and butanoyl-CoA, respectively. Is the final enzyme in the meta-cleavage pathway for the degradation of aromatic compounds such as phenols, cresols and catechols. NADP(+) can replace NAD(+) but the rate of reaction is much slower. This Pseudomonas sp. (strain CF600) protein is Acetaldehyde dehydrogenase (dmpF).